The primary structure comprises 658 residues: Palmitoyltransferase ZDHHC5-B (658 aa).

Over 1–24 (MPVGLSVGGALGDPSPSRPFRPSR) the chain is Cytoplasmic. A helical membrane pass occupies residues 25–45 (YVPVSAATAFLVGATTLFLCF). At 46–56 (TCPWLSEKFSS) the chain is on the extracellular side. A helical membrane pass occupies residues 57–77 (FIPLYNVVVFLFTLANFCMAT). Residues 78–159 (FMDPGVFPRA…NCIGRRNYRY (82 aa)) lie on the Cytoplasmic side of the membrane. One can recognise a DHHC domain in the interval 115 to 165 (KWCSTCRFYRPPRCSHCSVCDNCVEEFDHHCPWVNNCIGRRNYRYFFLFLL). Cys-145 functions as the S-palmitoyl cysteine intermediate in the catalytic mechanism. The helical transmembrane segment at 160–180 (FFLFLLSLTVHIMDVFGFSLL) threads the bilayer. The Extracellular portion of the chain corresponds to 181–202 (YILHHTKQLDLVQSGVTMAVMC). Residues 203-223 (VAGLFFVPVAGLTGFHVVLVA) form a helical membrane-spanning segment. The Cytoplasmic segment spans residues 224-658 (RGRTTNEQVT…VGGTTYEISV (435 aa)). Disordered regions lie at residues 306-419 (EIME…RSGS), 490-522 (ESLL…LSTA), and 540-658 (QREG…EISV). Residues 360-398 (PGKNHTASTHSSKMSRGNSMTESPSVPVTTGQPSYRSDP) are compositionally biased toward polar residues. Gly residues predominate over residues 407–419 (GCRGGAEGGRSGS). Over residues 565 to 575 (SSPPSRAPPLS) the composition is skewed to pro residues. Over residues 619–633 (SMPNSTIKQNVANHN) the composition is skewed to polar residues. Over residues 634-644 (THSHKPARGVK) the composition is skewed to basic residues.

This sequence belongs to the DHHC palmitoyltransferase family. ERF2/ZDHHC9 subfamily.

It localises to the cell membrane. It catalyses the reaction L-cysteinyl-[protein] + hexadecanoyl-CoA = S-hexadecanoyl-L-cysteinyl-[protein] + CoA. Functionally, palmitoyltransferase that catalyzes the addition of palmitate onto various protein substrates and is involved in a variety of cellular processes. The sequence is that of Palmitoyltransferase ZDHHC5-B from Danio rerio (Zebrafish).